The following is a 908-amino-acid chain: Vacuolar membrane protease (908 aa).

A disordered region spans residues 1–25 (MTSGEEEEGTREQVPVSQPTGTTSI). At 1–48 (MTSGEEEEGTREQVPVSQPTGTTSIVSTKEKQPNIFIRAIRATFGYRK) the chain is on the cytoplasmic side. A compositionally biased stretch (polar residues) spans 15-25 (PVSQPTGTTSI). The helical transmembrane segment at 49–69 (TSLTLFVLLTIFFTVAFSSYD) threads the bilayer. Residues 70 to 381 (NSLDFTIDLP…FSTSVTTLNT (312 aa)) lie on the Vacuolar side of the membrane. N143 and N162 each carry an N-linked (GlcNAc...) asparagine glycan. Zn(2+) contacts are provided by H176 and D188. The Proton acceptor role is filled by E221. Zn(2+)-binding residues include E222, E247, and H319. N354 is a glycosylation site (N-linked (GlcNAc...) asparagine). Residues 382–402 (INMVLIVLFPVLSGPLLFITV) form a helical membrane-spanning segment. The Cytoplasmic segment spans residues 403–411 (RYKKWNIGT). Residues 412 to 432 (ANLFSLPLAIVITSLVGAVVV) form a helical membrane-spanning segment. The Vacuolar segment spans residues 433–449 (NQGFRLVNEFLPASRPM). The helical transmembrane segment at 450 to 470 (LLVTTTTSILLLTYYILLNGI) threads the bilayer. Residues 471-480 (NFVSPSGDQK) lie on the Cytoplasmic side of the membrane. The chain crosses the membrane as a helical span at residues 481–501 (LVSIIQISFIYWIALIFVTRG). Over 502–514 (LSQNAIGDDHTGE) the chain is Vacuolar. The helical transmembrane segment at 515–535 (FAFTILFLLEATASLFGLIGW) threads the bilayer. Residues 536–602 (TFTRSVKEPT…MQHFGYDWSL (67 aa)) are Cytoplasmic-facing. The disordered stretch occupies residues 543-584 (EPTGDEEPLLNGRMERYVDGSDDEDDVEEEDDEDQSEEENHQ). Acidic residues predominate over residues 562–579 (GSDDEDDVEEEDDEDQSE). A helical membrane pass occupies residues 603-623 (QFLLIVPISSLVIYNSGWLVI). Topologically, residues 624 to 638 (DGINKSIQESLVAEN) are vacuolar. A glycan (N-linked (GlcNAc...) asparagine) is linked at N627. The helical transmembrane segment at 639–659 (FIYLIIQLFSQFWILPILPFV) threads the bilayer. The Cytoplasmic segment spans residues 660–664 (YKLNR). A helical transmembrane segment spans residues 665 to 685 (FMVLGLIAFALVGVTLISSVD). At 686–908 (PFNQDNPLKL…LVSLTNRIEV (223 aa)) the chain is on the vacuolar side. 2 N-linked (GlcNAc...) asparagine glycosylation sites follow: N752 and N764.

The protein belongs to the peptidase M28 family. Zn(2+) is required as a cofactor.

It localises to the vacuole membrane. May be involved in vacuolar sorting and osmoregulation. This is Vacuolar membrane protease from Candida tropicalis (strain ATCC MYA-3404 / T1) (Yeast).